We begin with the raw amino-acid sequence, 175 residues long: MEKIPVSAFLLLVALSYTLARDTTVKPGAKKDTKDSRPKLPQTLSRGWGDQLIWTQTYEEALYKSKTSNKPLMIIHHLDECPHSQALKKVFAENKEIQKLAEQFVLLNLVYETTDKHLSPDGQYVPRIMFVDPSLTVRADITGRYSNRLYAYEPADTALLLDNMKKALKLLKTEL.

Residues 1–20 (MEKIPVSAFLLLVALSYTLA) form the signal peptide. Positions 21–40 (RDTTVKPGAKKDTKDSRPKL) are required to promote cell adhesion. 2 consecutive short sequence motifs (homodimer stabilization; interchain) follow at residues 45-54 (SRGWGDQLIW) and 60-67 (EALYKSKT).

Belongs to the AGR family. In terms of assembly, monomer and homodimer. Interacts with LYPD3 and DAG1 (alphaDAG1). Interacts with MUC2; disulfide-linked. In terms of tissue distribution, expressed strongly in trachea, lung, stomach, colon, prostate and small intestine. Expressed weakly in pituitary gland, salivary gland, mammary gland, bladder, appendix, ovary, fetal lung, uterus, pancreas, kidney, fetal kidney, testis, placenta, thyroid gland and in estrogen receptor (ER)-positive breast cancer cell lines.

The protein localises to the secreted. Its subcellular location is the endoplasmic reticulum. Its function is as follows. Required for MUC2 post-transcriptional synthesis and secretion. May play a role in the production of mucus by intestinal cells. Proto-oncogene that may play a role in cell migration, cell differentiation and cell growth. Promotes cell adhesion. The polypeptide is Anterior gradient protein 2 homolog (AGR2) (Homo sapiens (Human)).